We begin with the raw amino-acid sequence, 224 residues long: Peroxiredoxin-6 (224 aa).

In terms of domain architecture, Thioredoxin spans 5–169; it reads LLLGDEAPNF…ILRVVDSLQL (165 aa). The interval 31–40 is required and sufficient for targeting to lysosomes and lamellar bodies; sequence DSWGILFSHP. Threonine 44 is modified (phosphothreonine). Cysteine 47 serves as the catalytic Cysteine sulfenic acid (-SOH) intermediate; for peroxidase activity. Residue lysine 63 is modified to N6-acetyllysine. Phosphotyrosine is present on tyrosine 89. Catalysis depends on aspartate 140, which acts as the For phospholipase activity. Position 177 is a phosphothreonine; by MAPK (threonine 177). Lysine 209 is subject to N6-acetyllysine; alternate. Lysine 209 carries the N6-succinyllysine; alternate modification.

Belongs to the peroxiredoxin family. Prx6 subfamily. In terms of assembly, homodimer. Interacts with GSTP1; mediates PRDX6 glutathionylation and regeneration. Interacts with APEX1. Interacts with STH. May interact with FAM168B. May interact with HTR2A. In terms of processing, phosphorylation at Thr-177 by MAP kinases increases the phospholipase activity of the enzyme. Phosphorylated form exhibits a greater lysophosphatidylcholine acyltransferase activity compared to the non-phosphorylated form. Post-translationally, irreversibly inactivated by overoxidation of Cys-47 to sulfinic acid (Cys-SO(2)H) and sulfonic acid (Cys-SO(3)H) forms upon oxidative stress.

Its subcellular location is the cytoplasm. The protein localises to the lysosome. The catalysed reaction is a hydroperoxide + 2 glutathione = an alcohol + glutathione disulfide + H2O. It carries out the reaction a 1,2-diacyl-sn-glycero-3-phosphocholine + H2O = a 1-acyl-sn-glycero-3-phosphocholine + a fatty acid + H(+). It catalyses the reaction a 1-acyl-sn-glycero-3-phosphocholine + an acyl-CoA = a 1,2-diacyl-sn-glycero-3-phosphocholine + CoA. The enzyme catalyses 1-hexadecanoyl-sn-glycero-3-phosphocholine + hexadecanoyl-CoA = 1,2-dihexadecanoyl-sn-glycero-3-phosphocholine + CoA. The catalysed reaction is 1,2-dihexadecanoyl-sn-glycero-3-phosphocholine + H2O = 1-hexadecanoyl-sn-glycero-3-phosphocholine + hexadecanoate + H(+). Its function is as follows. Thiol-specific peroxidase that catalyzes the reduction of hydrogen peroxide and organic hydroperoxides to water and alcohols, respectively. Can reduce H(2)O(2) and short chain organic, fatty acid, and phospholipid hydroperoxides. Also has phospholipase activity, can therefore either reduce the oxidized sn-2 fatty acyl group of phospholipids (peroxidase activity) or hydrolyze the sn-2 ester bond of phospholipids (phospholipase activity). These activities are dependent on binding to phospholipids at acidic pH and to oxidized phospholipds at cytosolic pH. Plays a role in cell protection against oxidative stress by detoxifying peroxides and in phospholipid homeostasis. Exhibits acyl-CoA-dependent lysophospholipid acyltransferase which mediates the conversion of lysophosphatidylcholine (1-acyl-sn-glycero-3-phosphocholine or LPC) into phosphatidylcholine (1,2-diacyl-sn-glycero-3-phosphocholine or PC). Shows a clear preference for LPC as the lysophospholipid and for palmitoyl CoA as the fatty acyl substrate. This chain is Peroxiredoxin-6 (Prdx6), found in Rattus norvegicus (Rat).